We begin with the raw amino-acid sequence, 46 residues long: Iota-conotoxin-like r11b (46 aa).

2 positions are modified to 4-hydroxyproline: Pro2 and Pro11. 4 disulfides stabilise this stretch: Cys5–Cys19, Cys12–Cys22, Cys18–Cys27, and Cys21–Cys38. Pro29 bears the 4-hydroxyproline mark. Residue Phe44 is modified to D-phenylalanine.

The natural D-Phe form of the peptide is more potent than the synthetic L-Phe form. In terms of tissue distribution, expressed by the venom duct.

Its subcellular location is the secreted. Its function is as follows. Iota-conotoxins bind to voltage-gated sodium channels (Nav) and act as agonists by shifting the voltage-dependence of activation to more hyperpolarized levels. Produces excitatory symptoms when injected intracranially into mice and is lethal at higher doses. Exposure to frog cutaneous pectoris induces spontaneous and repetitive action potentials. This effect is slowly reversible. Natural peptide (with D-Phe) is active on nerve, but not on muscle. Synthetic peptide (with L-Phe) is not active on both nerve and muscle. This chain is Iota-conotoxin-like r11b, found in Conus radiatus (Rayed cone).